A 560-amino-acid polypeptide reads, in one-letter code: Dihydroxy-acid dehydratase (560 aa).

Residue Asp80 participates in Mg(2+) binding. Position 121 (Cys121) interacts with [2Fe-2S] cluster. The Mg(2+) site is built by Asp122 and Lys123. Lys123 bears the N6-carboxylysine mark. Cys194 lines the [2Fe-2S] cluster pocket. Glu447 lines the Mg(2+) pocket. Ser473 functions as the Proton acceptor in the catalytic mechanism.

The protein belongs to the IlvD/Edd family. Homodimer. [2Fe-2S] cluster serves as cofactor. The cofactor is Mg(2+).

It catalyses the reaction (2R)-2,3-dihydroxy-3-methylbutanoate = 3-methyl-2-oxobutanoate + H2O. The enzyme catalyses (2R,3R)-2,3-dihydroxy-3-methylpentanoate = (S)-3-methyl-2-oxopentanoate + H2O. The protein operates within amino-acid biosynthesis; L-isoleucine biosynthesis; L-isoleucine from 2-oxobutanoate: step 3/4. It participates in amino-acid biosynthesis; L-valine biosynthesis; L-valine from pyruvate: step 3/4. In terms of biological role, functions in the biosynthesis of branched-chain amino acids. Catalyzes the dehydration of (2R,3R)-2,3-dihydroxy-3-methylpentanoate (2,3-dihydroxy-3-methylvalerate) into 2-oxo-3-methylpentanoate (2-oxo-3-methylvalerate) and of (2R)-2,3-dihydroxy-3-methylbutanoate (2,3-dihydroxyisovalerate) into 2-oxo-3-methylbutanoate (2-oxoisovalerate), the penultimate precursor to L-isoleucine and L-valine, respectively. The protein is Dihydroxy-acid dehydratase of Chlorobaculum tepidum (strain ATCC 49652 / DSM 12025 / NBRC 103806 / TLS) (Chlorobium tepidum).